We begin with the raw amino-acid sequence, 134 residues long: Interleukin-5 (134 aa).

A signal peptide spans 1–21; that stretch reads MRMHLHLTLVALGAAYVCANA. Residues Asn-76 and Asn-90 are each glycosylated (N-linked (GlcNAc...) asparagine).

The protein belongs to the IL-5 family. In terms of assembly, homodimer; disulfide-linked. Interacts with IL5RA. Interacts with CSF2RB.

Its subcellular location is the secreted. Homodimeric cytokine expressed predominantly by T-lymphocytes and NK cells that plays an important role in the survival, differentiation, and chemotaxis of eosinophils. Also acts on activated and resting B-cells to induce immunoglobulin production, growth, and differentiation. Mechanistically, exerts its biological effects through a receptor composed of IL5RA subunit and the cytokine receptor common subunit beta/CSF2RB. Binding to the receptor leads to activation of various kinases including LYN, SYK and JAK2 and thereby propagates signals through the RAS-MAPK and JAK-STAT5 pathways respectively. This chain is Interleukin-5 (IL5), found in Bos taurus (Bovine).